A 169-amino-acid chain; its full sequence is Small ribosomal subunit protein uS5 (169 aa).

The S5 DRBM domain occupies 15–79 (LKEQVVAINR…EAAKKNLRRI (65 aa)).

The protein belongs to the universal ribosomal protein uS5 family. As to quaternary structure, part of the 30S ribosomal subunit. Contacts proteins S4 and S8.

In terms of biological role, with S4 and S12 plays an important role in translational accuracy. Its function is as follows. Located at the back of the 30S subunit body where it stabilizes the conformation of the head with respect to the body. The sequence is that of Small ribosomal subunit protein uS5 from Solibacter usitatus (strain Ellin6076).